Reading from the N-terminus, the 361-residue chain is Eukaryotic translation initiation factor 3 subunit F (361 aa).

The interval 1 to 86 is disordered; that stretch reads MATPAVPVSA…PAPALPGPAL (86 aa). Residue Ala-2 is modified to N-acetylalanine. Composition is skewed to pro residues over residues 9 to 20 and 30 to 40; these read SAPPATPAPVPA and VPAPTPAPAAA. The segment covering 41-78 has biased composition (low complexity); the sequence is PVPAAAPASSSDPAAAAATTAAPGQTPASAQAPAQTPA. Ser-50 carries the phosphoserine; by CDK11; in vitro modification. Residues 96 to 226 form the MPN domain; it reads VRLHPVILAS…IKAYVSTLMG (131 aa). Position 242 is an N6-acetyllysine (Lys-242). Ser-262 carries the post-translational modification Phosphoserine.

This sequence belongs to the eIF-3 subunit F family. As to quaternary structure, component of the eukaryotic translation initiation factor 3 (eIF-3) complex, which is composed of 13 subunits: EIF3A, EIF3B, EIF3C, EIF3D, EIF3E, EIF3F, EIF3G, EIF3H, EIF3I, EIF3J, EIF3K, EIF3L and EIF3M. The eIF-3 complex appears to include 3 stable modules: module A is composed of EIF3A, EIF3B, EIF3G and EIF3I; module B is composed of EIF3F, EIF3H, and EIF3M; and module C is composed of EIF3C, EIF3D, EIF3E, EIF3K and EIF3L. EIF3C of module C binds EIF3B of module A and EIF3H of module B, thereby linking the three modules. EIF3J is a labile subunit that binds to the eIF-3 complex via EIF3B. The eIF-3 complex interacts with RPS6KB1 under conditions of nutrient depletion. Mitogenic stimulation leads to binding and activation of a complex composed of MTOR and RPTOR, leading to phosphorylation and release of RPS6KB1 and binding of EIF4B to eIF-3. Interacts with RNF139; the interaction leads to protein translation inhibitions in a ubiquitination-dependent manner. Interacts with DTX1, the interaction is required for deubiquitinating activity towards NOTCH1. Post-translationally, phosphorylation is enhanced upon serum stimulation. Phosphorylated during apoptosis by caspase-processed CDK11.

Its subcellular location is the cytoplasm. The catalysed reaction is Thiol-dependent hydrolysis of ester, thioester, amide, peptide and isopeptide bonds formed by the C-terminal Gly of ubiquitin (a 76-residue protein attached to proteins as an intracellular targeting signal).. In terms of biological role, component of the eukaryotic translation initiation factor 3 (eIF-3) complex, which is required for several steps in the initiation of protein synthesis. The eIF-3 complex associates with the 40S ribosome and facilitates the recruitment of eIF-1, eIF-1A, eIF-2:GTP:methionyl-tRNAi and eIF-5 to form the 43S pre-initiation complex (43S PIC). The eIF-3 complex stimulates mRNA recruitment to the 43S PIC and scanning of the mRNA for AUG recognition. The eIF-3 complex is also required for disassembly and recycling of post-termination ribosomal complexes and subsequently prevents premature joining of the 40S and 60S ribosomal subunits prior to initiation. The eIF-3 complex specifically targets and initiates translation of a subset of mRNAs involved in cell proliferation, including cell cycling, differentiation and apoptosis, and uses different modes of RNA stem-loop binding to exert either translational activation or repression. Functionally, deubiquitinates activated NOTCH1, promoting its nuclear import, thereby acting as a positive regulator of Notch signaling. The protein is Eukaryotic translation initiation factor 3 subunit F of Pan troglodytes (Chimpanzee).